Reading from the N-terminus, the 161-residue chain is Small ribosomal subunit protein uS9 (161 aa).

This sequence belongs to the universal ribosomal protein uS9 family.

This is Small ribosomal subunit protein uS9 from Rickettsia felis (strain ATCC VR-1525 / URRWXCal2) (Rickettsia azadi).